The sequence spans 712 residues: Cadherin-13 (712 aa).

An N-terminal signal peptide occupies residues 1–22 (MQHKTQLTLSFLLSQVLLLACA). Residues 23–138 (EDLECTPGFQ…GNLGIPRQKR (116 aa)) constitute a propeptide that is removed on maturation. The N-linked (GlcNAc...) asparagine glycan is linked to Asn-86. 5 consecutive Cadherin domains span residues 143–245 (TPIL…RPMF), 246–363 (KEGP…PPEF), 364–477 (TKKE…GPVF), 478–585 (HPNP…VPSL), and 586–680 (YPTL…LQVC). Asn-382, Asn-500, Asn-530, Asn-638, and Asn-671 each carry an N-linked (GlcNAc...) asparagine glycan. Asp-693 carries the GPI-anchor amidated aspartate lipid modification. The propeptide at 694-712 (ALHISMTLILLSLFSLFCL) is removed in mature form.

As to quaternary structure, by contrast to classical cadherins, homodimerization in trans is not mediated by cadherin EC1 domain strand-swapping, but instead through a homophilic adhesive interface which joins two elongated EC1-EC2 domains through a region near their Ca2+-binding sites to form a tetrahedral, X-like shape. As to expression, neural tissues. Also found in muscles; kidney and retina.

It is found in the cell membrane. Its subcellular location is the cytoplasm. Its function is as follows. Cadherins are calcium-dependent cell adhesion proteins. They preferentially interact with themselves in a homophilic manner in connecting cells; cadherins may thus contribute to the sorting of heterogeneous cell types. May act as a negative regulator of neural cell growth. In Gallus gallus (Chicken), this protein is Cadherin-13 (CDH13).